We begin with the raw amino-acid sequence, 522 residues long: O-fucosyltransferase 38 (522 aa).

A helical; Signal-anchor for type II membrane protein transmembrane segment spans residues 26-46 (AISLYLIFVFAFTIWVLVFSS). Residues 54–67 (DHTKHQQQHHRDLI) show a composition bias toward basic and acidic residues. Residues 54–73 (DHTKHQQQHHRDLIDSESFP) form a disordered region. An N-linked (GlcNAc...) asparagine glycan is attached at N147. 284–286 (HLR) contacts substrate. N325 carries an N-linked (GlcNAc...) asparagine glycan. The disordered stretch occupies residues 475–496 (HKDRQGAPRRRKGPTQGIKGRA).

It belongs to the glycosyltransferase GT106 family.

It localises to the membrane. The protein operates within glycan metabolism. The sequence is that of O-fucosyltransferase 38 from Arabidopsis thaliana (Mouse-ear cress).